The following is a 386-amino-acid chain: tRNA N6-adenosine threonylcarbamoyltransferase (386 aa).

Histidine 112 and histidine 116 together coordinate Fe cation. Substrate is bound by residues 134–138 (LASGG), aspartate 167, glycine 180, and asparagine 322. Residue aspartate 350 participates in Fe cation binding.

Belongs to the KAE1 / TsaD family. Fe(2+) is required as a cofactor.

It localises to the cytoplasm. It catalyses the reaction L-threonylcarbamoyladenylate + adenosine(37) in tRNA = N(6)-L-threonylcarbamoyladenosine(37) in tRNA + AMP + H(+). Functionally, required for the formation of a threonylcarbamoyl group on adenosine at position 37 (t(6)A37) in tRNAs that read codons beginning with adenine. Is involved in the transfer of the threonylcarbamoyl moiety of threonylcarbamoyl-AMP (TC-AMP) to the N6 group of A37, together with TsaE and TsaB. TsaD likely plays a direct catalytic role in this reaction. The sequence is that of tRNA N6-adenosine threonylcarbamoyltransferase from Rickettsia akari (strain Hartford).